The chain runs to 47 residues: Thionin (47 aa).

4 cysteine pairs are disulfide-bonded: Cys-3–Cys-41, Cys-4–Cys-33, Cys-12–Cys-31, and Cys-16–Cys-27.

Belongs to the plant thionin (TC 1.C.44) family. 4 C-C subfamily.

It is found in the secreted. Functionally, thionins are small plant proteins which are toxic to animal cells. They seem to exert their toxic effect at the level of the cell membrane. Their precise function is not known. In Pyrularia pubera (Buffalo nut), this protein is Thionin (THI1).